We begin with the raw amino-acid sequence, 226 residues long: Large ribosomal subunit protein uL1 (226 aa).

Belongs to the universal ribosomal protein uL1 family. Part of the 50S ribosomal subunit.

In terms of biological role, binds directly to 23S rRNA. The L1 stalk is quite mobile in the ribosome, and is involved in E site tRNA release. Its function is as follows. Protein L1 is also a translational repressor protein, it controls the translation of the L11 operon by binding to its mRNA. This is Large ribosomal subunit protein uL1 from Mycoplasma genitalium (strain ATCC 33530 / DSM 19775 / NCTC 10195 / G37) (Mycoplasmoides genitalium).